The following is a 224-amino-acid chain: Octanoyltransferase (224 aa).

The BPL/LPL catalytic domain maps to 45–223 (PSNKQAVWML…SLNKRFGLLW (179 aa)). Residues 87–94 (RGGDVTHH), 154–156 (SIG), and 167–169 (GIA) contribute to the substrate site. The active-site Acyl-thioester intermediate is Cys185.

It belongs to the LipB family.

The protein localises to the cytoplasm. It carries out the reaction octanoyl-[ACP] + L-lysyl-[protein] = N(6)-octanoyl-L-lysyl-[protein] + holo-[ACP] + H(+). It participates in protein modification; protein lipoylation via endogenous pathway; protein N(6)-(lipoyl)lysine from octanoyl-[acyl-carrier-protein]: step 1/2. In terms of biological role, catalyzes the transfer of endogenously produced octanoic acid from octanoyl-acyl-carrier-protein onto the lipoyl domains of lipoate-dependent enzymes. Lipoyl-ACP can also act as a substrate although octanoyl-ACP is likely to be the physiological substrate. In Prochlorococcus marinus (strain SARG / CCMP1375 / SS120), this protein is Octanoyltransferase.